The chain runs to 156 residues: Small ribosomal subunit protein uS7 (156 aa).

This sequence belongs to the universal ribosomal protein uS7 family. Part of the 30S ribosomal subunit. Contacts proteins S9 and S11.

In terms of biological role, one of the primary rRNA binding proteins, it binds directly to 16S rRNA where it nucleates assembly of the head domain of the 30S subunit. Is located at the subunit interface close to the decoding center, probably blocks exit of the E-site tRNA. In Deinococcus deserti (strain DSM 17065 / CIP 109153 / LMG 22923 / VCD115), this protein is Small ribosomal subunit protein uS7.